Reading from the N-terminus, the 444-residue chain is Amino-acid acetyltransferase (444 aa).

One can recognise an N-acetyltransferase domain in the interval 295-434 (EKVRRANIND…QALYNYQRRS (140 aa)).

The protein belongs to the acetyltransferase family. ArgA subfamily. As to quaternary structure, homohexamer.

It localises to the cytoplasm. The catalysed reaction is L-glutamate + acetyl-CoA = N-acetyl-L-glutamate + CoA + H(+). Its pathway is amino-acid biosynthesis; L-arginine biosynthesis; N(2)-acetyl-L-ornithine from L-glutamate: step 1/4. The polypeptide is Amino-acid acetyltransferase (Proteus mirabilis (strain HI4320)).